A 128-amino-acid polypeptide reads, in one-letter code: Secreted RxLR effector protein RXLR-C09 (128 aa).

Residues 1 to 22 form the signal peptide; sequence MRFCLVFIRLAAFVILSGGATS. Positions 58-75 match the RxLR-dEER motif; it reads RLLRLNDQADISGHDEER.

This sequence belongs to the RxLR effector family.

The protein resides in the secreted. It localises to the host cell membrane. It is found in the host nucleus. Its function is as follows. Secreted effector that suppresses pattern-triggered immunity (PTI) in plant host. In Plasmopara halstedii (Downy mildew of sunflower), this protein is Secreted RxLR effector protein RXLR-C09.